Consider the following 327-residue polypeptide: cAMP-dependent protein kinase regulatory subunit (327 aa).

The segment at 1-47 (MTNNISHNQKATEKVEAQNNNNITRKRRGAISSEPLGDKPATPLPNI) is disordered. Positions 1–65 (MTNNISHNQK…RLEQALSNNI (65 aa)) are dimerization and phosphorylation. The Pseudophosphorylation motif signature appears at 27–31 (RRGAI). Ser-32 carries the phosphoserine modification. Residues 66–188 (MFSH…EKVS), Glu-136, Arg-145, 189–327 (ILRH…SQKS), Glu-262, and Arg-271 each bind 3',5'-cyclic AMP.

Belongs to the cAMP-dependent kinase regulatory chain family. As to quaternary structure, in Dictyostelium the holoenzyme is a dimer composed of a regulatory (R) and a catalytic (C) subunit. In the presence of cAMP it dissociates into the active C subunit and an R monomer. In other eukaryotes the holoenzyme is a tetramer composed of 2 regulatory (R) and 2 catalytic (C) subunits. In the presence of cAMP it dissociates into active monomeric C subunits and an R dimer. The pseudophosphorylation site binds to the substrate-binding region of the catalytic chain but is not phosphorylated. The physiological significance of phosphorylations by other kinases is unclear.

This Dictyostelium discoideum (Social amoeba) protein is cAMP-dependent protein kinase regulatory subunit (pkaR).